The sequence spans 107 residues: MLLKQLPQAVQQIRCISSATTAVTRLHRSVYCRLYPTVVVQPDGSTINIRYHEPRKIIKLPLDLSTLTDAERRARLEARKPRKKVKIMEEVEDNFNAKKYMKYIKKK.

A mitochondrion-targeting transit peptide spans 1–16; sequence MLLKQLPQAVQQIRCI.

It belongs to the mitochondrion-specific ribosomal protein mL55 family. In terms of assembly, component of the mitochondrial ribosome large subunit (39S) which comprises a 16S rRNA and about 50 distinct proteins. Ubiquitously expressed (at protein level).

It is found in the mitochondrion. Involved in mitochondrial biogenesis and G2/M phase cell cycle progression. This chain is Large ribosomal subunit protein mL55 (mRpL55), found in Drosophila melanogaster (Fruit fly).